The primary structure comprises 444 residues: N-succinylarginine dihydrolase (444 aa).

Residues Ala-19 to Ser-28, Asn-110, and His-137 to Arg-138 contribute to the substrate site. Residue Glu-174 is part of the active site. Position 214 (Arg-214) interacts with substrate. The active site involves His-250. The substrate site is built by Asp-252 and Asn-362. Cys-368 acts as the Nucleophile in catalysis.

This sequence belongs to the succinylarginine dihydrolase family. Homodimer.

It catalyses the reaction N(2)-succinyl-L-arginine + 2 H2O + 2 H(+) = N(2)-succinyl-L-ornithine + 2 NH4(+) + CO2. The protein operates within amino-acid degradation; L-arginine degradation via AST pathway; L-glutamate and succinate from L-arginine: step 2/5. Its function is as follows. Catalyzes the hydrolysis of N(2)-succinylarginine into N(2)-succinylornithine, ammonia and CO(2). The protein is N-succinylarginine dihydrolase of Shewanella amazonensis (strain ATCC BAA-1098 / SB2B).